The primary structure comprises 144 residues: uncharacterized protein (144 aa).

The interval 1 to 24 (MGKVIQFPFGEEPEKKEEKELKTE) is disordered. Residues 12–24 (EPEKKEEKELKTE) show a composition bias toward basic and acidic residues.

This is an uncharacterized protein from Aquifex aeolicus (strain VF5).